We begin with the raw amino-acid sequence, 122 residues long: Prefoldin subunit 1 (122 aa).

This sequence belongs to the prefoldin subunit beta family. In terms of assembly, heterohexamer of two PFD-alpha type and four PFD-beta type subunits.

In terms of biological role, binds specifically to cytosolic chaperonin (c-CPN) and transfers target proteins to it. Binds to nascent polypeptide chain and promotes folding in an environment in which there are many competing pathways for nonnative proteins. In Danio rerio (Zebrafish), this protein is Prefoldin subunit 1 (pfdn1).